The chain runs to 406 residues: 4-O-methyl-glucuronoyl methylesterase (406 aa).

Residues 1–17 form the signal peptide; the sequence is MAFRWLSFLLLALPVLA. Cys31 and Cys64 are disulfide-bonded. Residues Asn100, Asn110, Asn122, and Asn178 are each glycosylated (N-linked (GlcNAc...) asparagine). Residues 215–220 carry the GXSYXG catalytic site motif motif; sequence GCSRDG. 2 disulfides stabilise this stretch: Cys216/Cys352 and Cys248/Cys324. Catalysis depends on Ser217, which acts as the Nucleophile. Substrate is bound by residues Lys221, Gln263, and Glu271. Asn285 carries an N-linked (GlcNAc...) asparagine glycan. Trp315 contacts substrate. An N-linked (GlcNAc...) asparagine glycan is attached at Asn348. The active-site Proton donor/acceptor is His351. 3 N-linked (GlcNAc...) asparagine glycosylation sites follow: Asn376, Asn387, and Asn398.

Belongs to the carbohydrate esterase 15 (CE15) family.

The protein resides in the secreted. It catalyses the reaction a 4-O-methyl-alpha-D-glucuronosyl ester derivative + H2O = 4-O-methyl-alpha-D-glucuronate derivative + an alcohol + H(+). In terms of biological role, glucuronoyl esterase which may play a significant role in biomass degradation, as it is considered to disconnect hemicellulose from lignin through the hydrolysis of the ester bond between 4-O-methyl-D-glucuronic acid residues of glucuronoxylans and aromatic alcohols of lignin. This is 4-O-methyl-glucuronoyl methylesterase from Phanerochaete carnosa (strain HHB-10118-sp) (White-rot fungus).